A 299-amino-acid polypeptide reads, in one-letter code: NAD(+) hydrolase PdTIR (299 aa).

A TIR domain is found at 164 to 297; that stretch reads PPHDIFISHA…EIVADLMAII (134 aa). NAD(+) is bound by residues 173–174 and arginine 203; that span reads AW. Glutamate 239 is an active-site residue.

Homodimer. Interacts with host MYD88.

The catalysed reaction is NAD(+) + H2O = ADP-D-ribose + nicotinamide + H(+). Its function is as follows. NAD(+) hydrolase (NADase) that catalyzes cleavage of NAD(+) into ADP-D-ribose (ADPR) and nicotinamide. This is NAD(+) hydrolase PdTIR from Paracoccus denitrificans (strain Pd 1222).